Reading from the N-terminus, the 410-residue chain is MAKVSLEKDKIKFLLVEGVHQKALESLRAAGYTNIEFHKGALDDEQLKESIRDAHFIGLRSRTHLTEDVINAAEKLVAIGCFCIGTNQVDLDAAAKRGIPVFNAPFSNTRSVAELVIGELLLLLRGVPEANAKAHRGVWNKLAAGSFEARGKKLGIIGYGHIGTQLGILAESLGMYVYFYDIENKLPLGNATQVQHLSDLLNMSDVVSLHVPENPSTKNMMGAKEISLMKPGSLLINASRGTVVDIPALCDALASKHLAGAAIDVFPTEPATNSDPFTSPLCEFDNVLLTPHIGGSTQEAQENIGLEVAGKLIKYSDNGSTLSAVNFPEVSLPLHGGRRLMHIHENRPGVLTALNKIFAEQGVNIAAQYLQTSAQMGYVVIDIEADEDVAEKALQAMKAIPGTIRARLLY.

NAD(+) contacts are provided by residues 161–162 (HI), aspartate 181, 238–240 (ASR), and aspartate 264. The active site involves arginine 240. Residue glutamate 269 is part of the active site. Histidine 292 acts as the Proton donor in catalysis. 292-295 (HIGG) lines the NAD(+) pocket. The 72-residue stretch at 339-410 (RLMHIHENRP…PGTIRARLLY (72 aa)) folds into the ACT domain.

Belongs to the D-isomer specific 2-hydroxyacid dehydrogenase family. As to quaternary structure, homotetramer.

The enzyme catalyses (2R)-3-phosphoglycerate + NAD(+) = 3-phosphooxypyruvate + NADH + H(+). It carries out the reaction (R)-2-hydroxyglutarate + NAD(+) = 2-oxoglutarate + NADH + H(+). Its pathway is amino-acid biosynthesis; L-serine biosynthesis; L-serine from 3-phospho-D-glycerate: step 1/3. With respect to regulation, in bacteria displays feedback inhibition by L-serine. Its function is as follows. Catalyzes the reversible oxidation of 3-phospho-D-glycerate to 3-phosphonooxypyruvate, the first step of the phosphorylated L-serine biosynthesis pathway. Also catalyzes the reversible oxidation of 2-hydroxyglutarate to 2-oxoglutarate. In Escherichia coli O6:H1 (strain CFT073 / ATCC 700928 / UPEC), this protein is D-3-phosphoglycerate dehydrogenase (serA).